A 156-amino-acid polypeptide reads, in one-letter code: Cytochrome c-type biogenesis protein CcmE 1 (156 aa).

Residues 1–8 (MNATRKQR) are Cytoplasmic-facing. The helical; Signal-anchor for type II membrane protein transmembrane segment at 9 to 29 (LWLVIGVLTAAALAVTLIALA) threads the bilayer. At 30–156 (LQRNMSYLFT…AAAAPLSGVR (127 aa)) the chain is on the periplasmic side. Heme-binding residues include His-123 and Tyr-127.

This sequence belongs to the CcmE/CycJ family.

It is found in the cell inner membrane. Heme chaperone required for the biogenesis of c-type cytochromes. Transiently binds heme delivered by CcmC and transfers the heme to apo-cytochromes in a process facilitated by CcmF and CcmH. The chain is Cytochrome c-type biogenesis protein CcmE 1 from Xanthomonas campestris pv. campestris (strain 8004).